The chain runs to 412 residues: Peptidase T (412 aa).

A Zn(2+)-binding site is contributed by His-81. The active site involves Asp-83. Asp-144 serves as a coordination point for Zn(2+). The Proton acceptor role is filled by Glu-178. Zn(2+) contacts are provided by Glu-179, Asp-201, and His-383.

This sequence belongs to the peptidase M20B family. Zn(2+) serves as cofactor.

It localises to the cytoplasm. The enzyme catalyses Release of the N-terminal residue from a tripeptide.. Functionally, cleaves the N-terminal amino acid of tripeptides. This is Peptidase T from Bacillus cereus (strain ZK / E33L).